The chain runs to 364 residues: 4-hydroxythreonine-4-phosphate dehydrogenase (364 aa).

Residues H148 and T149 each coordinate substrate. 3 residues coordinate a divalent metal cation: H177, H216, and H301. Positions 309, 318, and 327 each coordinate substrate.

Belongs to the PdxA family. Homodimer. Zn(2+) is required as a cofactor. Requires Mg(2+) as cofactor. It depends on Co(2+) as a cofactor.

The protein localises to the cytoplasm. It carries out the reaction 4-(phosphooxy)-L-threonine + NAD(+) = 3-amino-2-oxopropyl phosphate + CO2 + NADH. The protein operates within cofactor biosynthesis; pyridoxine 5'-phosphate biosynthesis; pyridoxine 5'-phosphate from D-erythrose 4-phosphate: step 4/5. Catalyzes the NAD(P)-dependent oxidation of 4-(phosphooxy)-L-threonine (HTP) into 2-amino-3-oxo-4-(phosphooxy)butyric acid which spontaneously decarboxylates to form 3-amino-2-oxopropyl phosphate (AHAP). The chain is 4-hydroxythreonine-4-phosphate dehydrogenase from Campylobacter jejuni (strain RM1221).